The primary structure comprises 160 residues: Large ribosomal subunit protein uL16 (160 aa).

The interval 138–160 is disordered; the sequence is KNLENSSQENTKDSKKSQEEVKQ. The segment covering 147 to 160 has biased composition (basic and acidic residues); the sequence is NTKDSKKSQEEVKQ.

The protein belongs to the universal ribosomal protein uL16 family. As to quaternary structure, part of the 50S ribosomal subunit.

Its function is as follows. Binds 23S rRNA and is also seen to make contacts with the A and possibly P site tRNAs. This Prochlorococcus marinus (strain AS9601) protein is Large ribosomal subunit protein uL16.